The following is a 109-amino-acid chain: Oncomodulin-2 (109 aa).

EF-hand domains lie at 39–74 (MSAS…FESG) and 78–109 (LTES…MVHS). Positions 52, 54, 56, 58, 63, 91, 93, 95, 97, and 102 each coordinate Ca(2+).

It belongs to the parvalbumin family.

The polypeptide is Oncomodulin-2 (OCM2) (Homo sapiens (Human)).